The primary structure comprises 313 residues: Maintenance of mitochondrial morphology protein 1 (313 aa).

Over M1–G12 the chain is Lumenal. Residues L13–F33 form a helical membrane-spanning segment. The Cytoplasmic segment spans residues C34–D313. A compositionally biased stretch (polar residues) spans A42–N63. A disordered region spans residues A42–K65. The 199-residue stretch at E90–P288 folds into the SMP-LTD domain.

It belongs to the MMM1 family. In terms of assembly, homodimer. Component of the ER-mitochondria encounter structure (ERMES) or MDM complex, composed of mmm1, mdm10, mdm12 and mdm34. A mmm1 homodimer associates with one molecule of mdm12 on each side in a pairwise head-to-tail manner, and the SMP-LTD domains of mmm1 and mdm12 generate a continuous hydrophobic tunnel for phospholipid trafficking.

It localises to the endoplasmic reticulum membrane. Functionally, component of the ERMES/MDM complex, which serves as a molecular tether to connect the endoplasmic reticulum (ER) and mitochondria. Components of this complex are involved in the control of mitochondrial shape and protein biogenesis, and function in nonvesicular lipid trafficking between the ER and mitochondria. The mdm12-mmm1 subcomplex functions in the major beta-barrel assembly pathway that is responsible for biogenesis of all outer membrane beta-barrel proteins, and acts in a late step after the SAM complex. The mdm10-mdm12-mmm1 subcomplex further acts in the TOM40-specific pathway after the action of the mdm12-mmm1 complex. Essential for establishing and maintaining the structure of mitochondria and maintenance of mtDNA nucleoids. The protein is Maintenance of mitochondrial morphology protein 1 of Schizosaccharomyces pombe (strain 972 / ATCC 24843) (Fission yeast).